Consider the following 351-residue polypeptide: Holliday junction branch migration complex subunit RuvB (351 aa).

A large ATPase domain (RuvB-L) region spans residues 1–182 (MNDRLITPDA…FGIVQRLEYY (182 aa)). ATP-binding positions include isoleucine 21, arginine 22, glycine 63, lysine 66, threonine 67, threonine 68, 129 to 131 (EDF), arginine 172, tyrosine 182, and arginine 219. Threonine 67 is a Mg(2+) binding site. The interval 183-253 (NVADLSGIVK…VAHAAMELLN (71 aa)) is small ATPAse domain (RuvB-S). The interval 256 to 351 (RNGFDEQDRR…QDAPPVGRER (96 aa)) is head domain (RuvB-H). DNA-binding residues include arginine 292, arginine 311, and arginine 316. The disordered stretch occupies residues 328–351 (LNPPRQPDTSPDLFQDAPPVGRER).

It belongs to the RuvB family. In terms of assembly, homohexamer. Forms an RuvA(8)-RuvB(12)-Holliday junction (HJ) complex. HJ DNA is sandwiched between 2 RuvA tetramers; dsDNA enters through RuvA and exits via RuvB. An RuvB hexamer assembles on each DNA strand where it exits the tetramer. Each RuvB hexamer is contacted by two RuvA subunits (via domain III) on 2 adjacent RuvB subunits; this complex drives branch migration. In the full resolvosome a probable DNA-RuvA(4)-RuvB(12)-RuvC(2) complex forms which resolves the HJ.

The protein localises to the cytoplasm. It catalyses the reaction ATP + H2O = ADP + phosphate + H(+). Its function is as follows. The RuvA-RuvB-RuvC complex processes Holliday junction (HJ) DNA during genetic recombination and DNA repair, while the RuvA-RuvB complex plays an important role in the rescue of blocked DNA replication forks via replication fork reversal (RFR). RuvA specifically binds to HJ cruciform DNA, conferring on it an open structure. The RuvB hexamer acts as an ATP-dependent pump, pulling dsDNA into and through the RuvAB complex. RuvB forms 2 homohexamers on either side of HJ DNA bound by 1 or 2 RuvA tetramers; 4 subunits per hexamer contact DNA at a time. Coordinated motions by a converter formed by DNA-disengaged RuvB subunits stimulates ATP hydrolysis and nucleotide exchange. Immobilization of the converter enables RuvB to convert the ATP-contained energy into a lever motion, pulling 2 nucleotides of DNA out of the RuvA tetramer per ATP hydrolyzed, thus driving DNA branch migration. The RuvB motors rotate together with the DNA substrate, which together with the progressing nucleotide cycle form the mechanistic basis for DNA recombination by continuous HJ branch migration. Branch migration allows RuvC to scan DNA until it finds its consensus sequence, where it cleaves and resolves cruciform DNA. The polypeptide is Holliday junction branch migration complex subunit RuvB (Alkalilimnicola ehrlichii (strain ATCC BAA-1101 / DSM 17681 / MLHE-1)).